A 112-amino-acid polypeptide reads, in one-letter code: Large ribosomal subunit protein bL20c (112 aa).

It belongs to the bacterial ribosomal protein bL20 family.

It localises to the plastid. Its subcellular location is the chloroplast. Functionally, binds directly to 23S ribosomal RNA and is necessary for the in vitro assembly process of the 50S ribosomal subunit. It is not involved in the protein synthesizing functions of that subunit. The sequence is that of Large ribosomal subunit protein bL20c (rpl20) from Chlamydomonas reinhardtii (Chlamydomonas smithii).